The primary structure comprises 250 residues: MGNLRVDVITLFPEMFSAITEYGITSRAVKQGLLQVTCWNPRDYTTDRHHTVDDRPFGGGPGMVMKIKPLEDALVSARQATGAAAKVIYLSPQGRKLTQQAVKGLAEQESLILIAGRYEGIDERFIEAHVDEEWSIGDYVLSGGELPAMVLIDAVTRLLPGALGHVDSAEEDSFTDGLLDCPHYTRPEVYADQRVPDVLLSGNHAHIRRWRMKQSLGRTFERRADLLESRSLSGEEKKLLEEYLRERDDS.

Residues G116 and 136–141 (IGDYVL) each bind S-adenosyl-L-methionine.

It belongs to the RNA methyltransferase TrmD family. Homodimer.

Its subcellular location is the cytoplasm. The catalysed reaction is guanosine(37) in tRNA + S-adenosyl-L-methionine = N(1)-methylguanosine(37) in tRNA + S-adenosyl-L-homocysteine + H(+). Functionally, specifically methylates guanosine-37 in various tRNAs. This Pseudomonas putida (strain ATCC 47054 / DSM 6125 / CFBP 8728 / NCIMB 11950 / KT2440) protein is tRNA (guanine-N(1)-)-methyltransferase.